An 87-amino-acid polypeptide reads, in one-letter code: UPF0250 protein BUAPTUC7_482 (87 aa).

Belongs to the UPF0250 family.

The polypeptide is UPF0250 protein BUAPTUC7_482 (Buchnera aphidicola subsp. Acyrthosiphon pisum (strain Tuc7)).